The following is a 437-amino-acid chain: F-box/FBD/LRR-repeat protein At5g22700 (437 aa).

Positions 5–51 constitute an F-box domain; the sequence is GDRISSLPDELLCQILSNLPTKNAVTTSILSTRWRSIWLSTPVLDID. 7 LRR repeats span residues 86-113, 134-160, 161-186, 187-210, 215-240, 272-297, and 322-350; these read RDDV…EVDC, SLRL…HLEE, NIYY…TVVR, IVDI…KLVL, GWFI…SLKD, PVTF…TISG, and NARF…VLGL. The FBD domain occupies 361 to 406; that stretch reads RVSSVPPCFLSSLEFVEIRSRLCRKRYVMKVARYFAKNSVMLKKFV.

The sequence is that of F-box/FBD/LRR-repeat protein At5g22700 from Arabidopsis thaliana (Mouse-ear cress).